The chain runs to 207 residues: Small ribosomal subunit protein uS4 (207 aa).

The interval 31 to 53 (KAKFDSKPGQHGRTSGTRTSDFG) is disordered. Residues 42 to 52 (GRTSGTRTSDF) are compositionally biased toward polar residues. The 62-residue stretch at 97-158 (SRLDNVVYRM…KSKKQTRVTE (62 aa)) folds into the S4 RNA-binding domain.

It belongs to the universal ribosomal protein uS4 family. In terms of assembly, part of the 30S ribosomal subunit. Contacts protein S5. The interaction surface between S4 and S5 is involved in control of translational fidelity.

Its function is as follows. One of the primary rRNA binding proteins, it binds directly to 16S rRNA where it nucleates assembly of the body of the 30S subunit. With S5 and S12 plays an important role in translational accuracy. The sequence is that of Small ribosomal subunit protein uS4 from Polaromonas sp. (strain JS666 / ATCC BAA-500).